The sequence spans 93 residues: UPF0728 protein C10orf53 homolog (93 aa).

The protein belongs to the UPF0728 family.

The sequence is that of UPF0728 protein C10orf53 homolog from Bos taurus (Bovine).